Here is a 143-residue protein sequence, read N- to C-terminus: Large ribosomal subunit protein uL15 (143 aa).

The segment at 1-52 is disordered; sequence MKLNTLAPAAGSKSAPKRLGRGIGSGLGKTSGKGHKGQKARSGGYHKVGFEG. Positions 21–31 are enriched in gly residues; sequence RGIGSGLGKTS.

It belongs to the universal ribosomal protein uL15 family. In terms of assembly, part of the 50S ribosomal subunit.

In terms of biological role, binds to the 23S rRNA. This is Large ribosomal subunit protein uL15 from Francisella tularensis subsp. mediasiatica (strain FSC147).